A 336-amino-acid polypeptide reads, in one-letter code: Phosphoribosylformylglycinamidine cyclo-ligase (336 aa).

It belongs to the AIR synthase family.

It localises to the cytoplasm. The enzyme catalyses 2-formamido-N(1)-(5-O-phospho-beta-D-ribosyl)acetamidine + ATP = 5-amino-1-(5-phospho-beta-D-ribosyl)imidazole + ADP + phosphate + H(+). The protein operates within purine metabolism; IMP biosynthesis via de novo pathway; 5-amino-1-(5-phospho-D-ribosyl)imidazole from N(2)-formyl-N(1)-(5-phospho-D-ribosyl)glycinamide: step 2/2. This Thermoanaerobacter sp. (strain X514) protein is Phosphoribosylformylglycinamidine cyclo-ligase.